The chain runs to 155 residues: Cytochrome P450 (155 aa).

Heme is bound at residue Cys-99.

Belongs to the cytochrome P450 family. It depends on heme as a cofactor.

This chain is Cytochrome P450, found in Helianthus annuus (Common sunflower).